Consider the following 175-residue polypeptide: MALTLEQKQQVVAEVSEVAANAYSAVAAEYHGIGVAKLTKLREQAREKGVVLKVVKNTLAKRAFEGTKFESMSDRMTGPLLLAFSMEDLGSAARVIFDFSKDHKALETKLVSVGGVVYGPEELERVSKLPTRDEAISILMATMNAPVTKLVQTMNAVPGKFVRTVAAIKDAKEAA.

The protein belongs to the universal ribosomal protein uL10 family. As to quaternary structure, part of the ribosomal stalk of the 50S ribosomal subunit. The N-terminus interacts with L11 and the large rRNA to form the base of the stalk. The C-terminus forms an elongated spine to which L12 dimers bind in a sequential fashion forming a multimeric L10(L12)X complex.

Its function is as follows. Forms part of the ribosomal stalk, playing a central role in the interaction of the ribosome with GTP-bound translation factors. The sequence is that of Large ribosomal subunit protein uL10 from Psychrobacter cryohalolentis (strain ATCC BAA-1226 / DSM 17306 / VKM B-2378 / K5).